The following is a 113-amino-acid chain: Protein crumbs homolog 3 (113 aa).

Positions 1 to 24 (MATPGLGVLLAFGLPMLPSGWSLT) are cleaved as a signal peptide. The interval 23–44 (LTAPDPFTNSTTQPPGDESNGG) is disordered. Residues 25–49 (APDPFTNSTTQPPGDESNGGLSSGA) lie on the Extracellular side of the membrane. Asn31 carries N-linked (GlcNAc...) asparagine glycosylation. A helical membrane pass occupies residues 50–70 (IVAITVVFSILGVLLIAVGLF). The Cytoplasmic portion of the chain corresponds to 71–113 (LLMRKLREKRQTEGTYRPSSEEQVGARAPPPPNLKLPPEERLI). The segment at 77-113 (REKRQTEGTYRPSSEEQVGARAPPPPNLKLPPEERLI) is interaction with EPB41L5. The disordered stretch occupies residues 80-113 (RQTEGTYRPSSEEQVGARAPPPPNLKLPPEERLI). Residues 83–92 (EGTYRPSSEE) are compositionally biased toward polar residues. The PDZ-binding motif lies at 110–113 (ERLI).

As to quaternary structure, component of a complex composed of CRB3, PALS1 and PATJ. Interacts (via C-terminus) with PALS1 (via PDZ domain). Interacts with PARD6A. Interacts (via intracellular domain) with EPB41L5. Interacts with WDR83. In terms of tissue distribution, expressed in the apical renal tubules (at protein level). Expressed in the retinal pigment epithelium.

The protein localises to the apical cell membrane. It is found in the cell junction. It localises to the tight junction. Involved in the establishment of cell polarity in mammalian epithelial cells. Regulates the morphogenesis of tight junctions. Involved in promoting phosphorylation and cytoplasmic retention of transcriptional coactivators YAP1 and WWTR1/TAZ which leads to suppression of TGFB1-dependent transcription of target genes such as CCN2/CTGF, SERPINE1/PAI1, SNAI1/SNAIL1 and SMAD7. The sequence is that of Protein crumbs homolog 3 (Crb3) from Mus musculus (Mouse).